A 346-amino-acid polypeptide reads, in one-letter code: MQFPEITPLDDALRPELQAAIDDKTKPLGALGRLESLALQLGLILGTARPVLQRPTVIVFAADHGVADAGVSAYPAEVTAQMVQNFLAGGAAINVFSRQHGIALEIVDAGVRAPLPAAPGLVNCRIADGTRNFAVEPAMTPEQAAAAMTAGMARVLRHAQQGCNVIGFGEMGIANTSAAACLMQRLTGLPLADCIGRGTGLDDAGLARKREVLERALALHADAQAPLDVLATFGGFEIAMMAGAFLAAAASRMVILVDGFIATAALLVAQRLDPNVLQYCVFTHCSHERGHRALLDQFGAAPLLALDLRLGEGTGAALAWPLLASAAAFLNEMATFSGAGVSTASP.

The active-site Proton acceptor is the Glu-312.

The protein belongs to the CobT family.

The catalysed reaction is 5,6-dimethylbenzimidazole + nicotinate beta-D-ribonucleotide = alpha-ribazole 5'-phosphate + nicotinate + H(+). Its pathway is nucleoside biosynthesis; alpha-ribazole biosynthesis; alpha-ribazole from 5,6-dimethylbenzimidazole: step 1/2. Its function is as follows. Catalyzes the synthesis of alpha-ribazole-5'-phosphate from nicotinate mononucleotide (NAMN) and 5,6-dimethylbenzimidazole (DMB). This chain is Nicotinate-nucleotide--dimethylbenzimidazole phosphoribosyltransferase, found in Cupriavidus necator (strain ATCC 17699 / DSM 428 / KCTC 22496 / NCIMB 10442 / H16 / Stanier 337) (Ralstonia eutropha).